The chain runs to 166 residues: Urease accessory protein UreE (166 aa).

A disordered region spans residues 132-156; the sequence is FQPEHGAYGGGHHHSRHGDEDFNYP.

It belongs to the UreE family.

The protein localises to the cytoplasm. Functionally, involved in urease metallocenter assembly. Binds nickel. Probably functions as a nickel donor during metallocenter assembly. The sequence is that of Urease accessory protein UreE from Pseudomonas fluorescens (strain ATCC BAA-477 / NRRL B-23932 / Pf-5).